The primary structure comprises 322 residues: Protein mono-ADP-ribosyltransferase PARP16 (322 aa).

Residues 1–287 (MQLSNRAAAR…RASSQLSWLS (287 aa)) are Cytoplasmic-facing. Residues 5–91 (NRAAAREAAS…AWDLVSWILS (87 aa)) enclose the PARP alpha-helical domain. Residues 94–279 (ILTIHSAKKA…VYSQKQPKRA (186 aa)) enclose the PARP catalytic domain. Histidine 152, tyrosine 182, and tyrosine 254 together coordinate NAD(+). The chain crosses the membrane as a helical span at residues 288 to 308 (SHWFVIMMSLYLLLLLIVSVT). Residues 309–322 (NSSVFHHFWNRVKR) are Lumenal-facing.

Belongs to the ARTD/PARP family. In terms of assembly, interacts with KPNB1. In terms of processing, auto-mono-ADP-ribosylated.

The protein localises to the endoplasmic reticulum membrane. The enzyme catalyses L-aspartyl-[protein] + NAD(+) = 4-O-(ADP-D-ribosyl)-L-aspartyl-[protein] + nicotinamide. The catalysed reaction is L-lysyl-[protein] + NAD(+) = N(6)-(ADP-D-ribosyl)-L-lysyl-[protein] + nicotinamide + H(+). It catalyses the reaction L-glutamyl-[protein] + NAD(+) = 5-O-(ADP-D-ribosyl)-L-glutamyl-[protein] + nicotinamide. With respect to regulation, in absence of activation signal, PARP16 is autoinhibited by the PARP alpha-helical domain (also named HD region), which prevents effective NAD(+)-binding. Activity is highly stimulated by signals, which unfold the PARP alpha-helical domain, relieving autoinhibition. Its function is as follows. Intracellular mono-ADP-ribosyltransferase that plays a role in different processes, such as protein translation and unfolded protein response (UPR), through the mono-ADP-ribosylation of proteins involved in those processes. Acts as an inhibitor of protein translation by catalyzing mono-ADP-ribosylation of ribosomal subunits, such as RPL14 and RPS6, thereby inhibiting polysome assembly and mRNA loading. Mono-ADP-ribosylation of ribosomal subunits is promoted by NMNAT2. Involved in the unfolded protein response (UPR) by ADP-ribosylating and activating EIF2AK3 and ERN1, two important UPR effectors. May also mediate mono-ADP-ribosylation of karyopherin KPNB1 a nuclear import factor. May not modify proteins on arginine or cysteine residues compared to other mono-ADP-ribosyltransferases. This Mus musculus (Mouse) protein is Protein mono-ADP-ribosyltransferase PARP16.